The sequence spans 179 residues: Large ribosomal subunit protein uL5 (179 aa).

The protein belongs to the universal ribosomal protein uL5 family. As to quaternary structure, part of the 50S ribosomal subunit; part of the 5S rRNA/L5/L18/L25 subcomplex. Contacts the 5S rRNA and the P site tRNA. Forms a bridge to the 30S subunit in the 70S ribosome.

Functionally, this is one of the proteins that bind and probably mediate the attachment of the 5S RNA into the large ribosomal subunit, where it forms part of the central protuberance. In the 70S ribosome it contacts protein S13 of the 30S subunit (bridge B1b), connecting the 2 subunits; this bridge is implicated in subunit movement. Contacts the P site tRNA; the 5S rRNA and some of its associated proteins might help stabilize positioning of ribosome-bound tRNAs. This is Large ribosomal subunit protein uL5 from Shewanella woodyi (strain ATCC 51908 / MS32).